The chain runs to 518 residues: Bifunctional purine biosynthesis protein PurH (518 aa).

One can recognise an MGS-like domain in the interval 1 to 144 (MSKRALISVS…KNHAAVTVVC (144 aa)).

This sequence belongs to the PurH family.

It carries out the reaction (6R)-10-formyltetrahydrofolate + 5-amino-1-(5-phospho-beta-D-ribosyl)imidazole-4-carboxamide = 5-formamido-1-(5-phospho-D-ribosyl)imidazole-4-carboxamide + (6S)-5,6,7,8-tetrahydrofolate. The catalysed reaction is IMP + H2O = 5-formamido-1-(5-phospho-D-ribosyl)imidazole-4-carboxamide. The protein operates within purine metabolism; IMP biosynthesis via de novo pathway; 5-formamido-1-(5-phospho-D-ribosyl)imidazole-4-carboxamide from 5-amino-1-(5-phospho-D-ribosyl)imidazole-4-carboxamide (10-formyl THF route): step 1/1. Its pathway is purine metabolism; IMP biosynthesis via de novo pathway; IMP from 5-formamido-1-(5-phospho-D-ribosyl)imidazole-4-carboxamide: step 1/1. The polypeptide is Bifunctional purine biosynthesis protein PurH (Lactococcus lactis subsp. cremoris (strain SK11)).